The primary structure comprises 267 residues: Auxin-responsive protein IAA18 (267 aa).

Positions 42-46 match the EAR-like (transcriptional repression) motif; that stretch reads LELKL. The disordered stretch occupies residues 81–101; that stretch reads PSSTKTTSHKRTAPGPVVGWP. The PB1 domain maps to 149–248; it reads GMFVKINMYG…SVKRLRVIKT (100 aa).

Belongs to the Aux/IAA family. As to quaternary structure, homodimers and heterodimers. Interacts with TPL.

It localises to the nucleus. Functionally, aux/IAA proteins are short-lived transcriptional factors that function as repressors of early auxin response genes at low auxin concentrations. Repression is thought to result from the interaction with auxin response factors (ARFs), proteins that bind to the auxin-responsive promoter element (AuxRE). Formation of heterodimers with ARF proteins may alter their ability to modulate early auxin response genes expression. In Arabidopsis thaliana (Mouse-ear cress), this protein is Auxin-responsive protein IAA18 (IAA18).